Here is an 88-residue protein sequence, read N- to C-terminus: DNA-directed RNA polymerase subunit omega (88 aa).

This sequence belongs to the RNA polymerase subunit omega family. As to quaternary structure, the RNAP catalytic core consists of 2 alpha, 1 beta, 1 beta' and 1 omega subunit. When a sigma factor is associated with the core the holoenzyme is formed, which can initiate transcription.

The catalysed reaction is RNA(n) + a ribonucleoside 5'-triphosphate = RNA(n+1) + diphosphate. Its function is as follows. Promotes RNA polymerase assembly. Latches the N- and C-terminal regions of the beta' subunit thereby facilitating its interaction with the beta and alpha subunits. This Anaeromyxobacter sp. (strain Fw109-5) protein is DNA-directed RNA polymerase subunit omega.